Reading from the N-terminus, the 379-residue chain is MTNIRKSHPLLKIINSSFIDLPAPSNISSWWNFGSLLGICLAVQILTGLFLAMHYTSDTMTAFSSVTHICRDVNYGWILRYLHANGASMFFICLYIHVGRGLYYGSYMYTETWNIGVILLFAVMATAFMGYVLPWGQMSFWGATVITNLLSAIPYIGTDLVEWIWGGFSVDKATLTRFFAFHFLLPFIISAMVMVHLLFLHETGSNNPTGIPSNMDMIPFHPYYTIKDILGLLLMIMVLLMLVLFSPDMLGDPDNYTPANPLNTPPHIKPEWYFLFAYAILRSIPNKLGGVMALVLSILILIIIPVLHTSKQRSMTFRPLSQCLFWLLVADLLXVTWIGGQPVEXPYVIXGQLASIXXXXIXIXXXXXXSXAXXXXXXW.

The next 4 membrane-spanning stretches (helical) occupy residues 33-53, 77-98, 113-133, and 178-198; these read FGSL…FLAM, WILR…YIHV, WNIG…GYVL, and FFAF…VHLL. Heme b-binding residues include histidine 83 and histidine 97. Residues histidine 182 and histidine 196 each coordinate heme b. Histidine 201 lines the a ubiquinone pocket. Helical transmembrane passes span 226–246, 288–308, 320–340, and 347–367; these read IKDI…VLFS, LGGV…PVLH, LSQC…WIGG, and YVIX…XXXX.

This sequence belongs to the cytochrome b family. As to quaternary structure, the cytochrome bc1 complex contains 11 subunits: 3 respiratory subunits (MT-CYB, CYC1 and UQCRFS1), 2 core proteins (UQCRC1 and UQCRC2) and 6 low-molecular weight proteins (UQCRH/QCR6, UQCRB/QCR7, UQCRQ/QCR8, UQCR10/QCR9, UQCR11/QCR10 and a cleavage product of UQCRFS1). This cytochrome bc1 complex then forms a dimer. The cofactor is heme b.

The protein localises to the mitochondrion inner membrane. Functionally, component of the ubiquinol-cytochrome c reductase complex (complex III or cytochrome b-c1 complex) that is part of the mitochondrial respiratory chain. The b-c1 complex mediates electron transfer from ubiquinol to cytochrome c. Contributes to the generation of a proton gradient across the mitochondrial membrane that is then used for ATP synthesis. The chain is Cytochrome b (MT-CYB) from Myotis goudotii (Malagasy mouse-eared bat).